We begin with the raw amino-acid sequence, 540 residues long: RNA exonuclease 3 (540 aa).

The segment at 7–34 (QFKHIVCPFLRTGRKCQSRNCFFSHDFQ) adopts a C3H1-type zinc-finger fold. The Exonuclease domain occupies 382–529 (HCALDCELCY…EDAVSALQLV (148 aa)).

This sequence belongs to the REXO1/REXO3 family.

The protein localises to the cytoplasm. It localises to the nucleus. In terms of biological role, 3' to 5' exoribonuclease required for proper 3' end maturation of MRP RNA and of the U5L snRNA. In Schizosaccharomyces pombe (strain 972 / ATCC 24843) (Fission yeast), this protein is RNA exonuclease 3 (rex3).